The chain runs to 107 residues: UPF0060 membrane protein M446_5886 (107 aa).

Helical transmembrane passes span 4 to 24, 31 to 51, 59 to 79, and 85 to 105; these read LLAY…IWAW, PLWL…LTRV, AYAA…WAAE, and RWDL…LLGP.

It belongs to the UPF0060 family.

It is found in the cell inner membrane. The polypeptide is UPF0060 membrane protein M446_5886 (Methylobacterium sp. (strain 4-46)).